The primary structure comprises 308 residues: Ribonuclease Z (308 aa).

Positions 61, 63, 65, 66, 142, 211, and 270 each coordinate Zn(2+). The active-site Proton acceptor is D65.

It belongs to the RNase Z family. As to quaternary structure, homodimer. Zn(2+) is required as a cofactor.

It catalyses the reaction Endonucleolytic cleavage of RNA, removing extra 3' nucleotides from tRNA precursor, generating 3' termini of tRNAs. A 3'-hydroxy group is left at the tRNA terminus and a 5'-phosphoryl group is left at the trailer molecule.. Its function is as follows. Zinc phosphodiesterase, which displays some tRNA 3'-processing endonuclease activity. Probably involved in tRNA maturation, by removing a 3'-trailer from precursor tRNA. The chain is Ribonuclease Z from Clostridium beijerinckii (strain ATCC 51743 / NCIMB 8052) (Clostridium acetobutylicum).